The following is a 233-amino-acid chain: Probable dihydroorotate dehydrogenase B (NAD(+)), electron transfer subunit (233 aa).

The FAD-binding FR-type domain occupies 1 to 87 (MYRVVTIEEV…RGPYGHGFIK (87 aa)). Residues Cys-202, Cys-207, Cys-210, and Cys-218 each contribute to the [2Fe-2S] cluster site.

This sequence belongs to the PyrK family. Heterotetramer of 2 PyrK and 2 PyrD type B subunits. Requires [2Fe-2S] cluster as cofactor. It depends on FAD as a cofactor.

It participates in pyrimidine metabolism; UMP biosynthesis via de novo pathway; orotate from (S)-dihydroorotate (NAD(+) route): step 1/1. In terms of biological role, responsible for channeling the electrons from the oxidation of dihydroorotate from the FMN redox center in the PyrD type B subunit to the ultimate electron acceptor NAD(+). The protein is Probable dihydroorotate dehydrogenase B (NAD(+)), electron transfer subunit of Thermococcus kodakarensis (strain ATCC BAA-918 / JCM 12380 / KOD1) (Pyrococcus kodakaraensis (strain KOD1)).